Consider the following 464-residue polypeptide: Secretion-regulating guanine nucleotide exchange factor (464 aa).

RCC1 repeat units follow at residues 15–67, 68–119, 120–171, 172–230, 231–283, 284–351, and 352–402; these read AVLF…VTDG, GDLF…LTEK, GQVL…TTAT, GSVF…LTDT, GELY…KTET, GKVF…VIRD, and KCCS…LAVC. The disordered stretch occupies residues 422–464; the sequence is DDTENTESQGAVDRDRLEGETISDLNPDRTRNGGGGCESETVQ. Residue Ser429 is modified to Phosphoserine.

In terms of assembly, interacts with SEC5. The interaction occurs only in the presence of magnesium or manganese and is stimulated by dCTP or GTP.

The protein resides in the cytoplasm. Its subcellular location is the nucleus. Its function is as follows. Probable guanine nucleotide exchange factor (GEF), which may be involved in the secretion process. The protein is Secretion-regulating guanine nucleotide exchange factor (Sergef) of Mus musculus (Mouse).